The chain runs to 358 residues: MAEKILNNDVLTSLQKKNRKQIQVWLYSILLLCLAIVLVGGATRLTGSGLSITDWRPIHGVIPPIGAEQWQEEFLKYQQIAQYKLLNRDMTLNAFKVIFWWEWAHRILGRLVGLLALLGLIWFWATKRIEKNILLKLTIVPILIAFQGAIGWWMVASGIGQSNLTSVSQYRLAFHLITACFIITFVTYLSRGFTEYSEKPANQRVQRFAGWLVVLILIEIYFGALVAGLHAGKVYNTWPLMDGQFIPDGLMQHNPVWLNLFENPLTIQFIHRFFAYFLFFVTIIHAFYVQKNIPHSTHSRRAFFICVMIVVQAFLGIITLLREVPIGLGLIHQSVALAILCFSVVHWRATKEAYRAVE.

Helical transmembrane passes span 22–42 (IQVW…VGGA), 107–127 (ILGR…WATK), 139–159 (IVPI…ASGI), 173–193 (AFHL…SRGF), 208–228 (FAGW…LVAG), 269–289 (FIHR…AFYV), 302–322 (AFFI…TLLR), and 324–344 (VPIG…CFSV). A heme-binding site is contributed by His-271. Residue His-332 coordinates heme.

Belongs to the COX15/CtaA family. Type 2 subfamily. In terms of assembly, interacts with CtaB. It depends on heme b as a cofactor.

The protein localises to the cell membrane. The enzyme catalyses Fe(II)-heme o + 2 A + H2O = Fe(II)-heme a + 2 AH2. Its pathway is porphyrin-containing compound metabolism; heme A biosynthesis; heme A from heme O: step 1/1. Its function is as follows. Catalyzes the conversion of heme O to heme A by two successive hydroxylations of the methyl group at C8. The first hydroxylation forms heme I, the second hydroxylation results in an unstable dihydroxymethyl group, which spontaneously dehydrates, resulting in the formyl group of heme A. The protein is Heme A synthase of Bartonella quintana (strain Toulouse) (Rochalimaea quintana).